We begin with the raw amino-acid sequence, 804 residues long: E3 UFM1-protein ligase 1 homolog (804 aa).

N-acetylmethionine is present on methionine 1. Residues isoleucine 397–isoleucine 483 form a disordered region. A compositionally biased stretch (low complexity) spans serine 400–serine 409. Residues leucine 463–lysine 475 show a composition bias toward basic and acidic residues.

The protein belongs to the UFL1 family.

E3 UFM1-protein ligase that mediates ufmylation of target proteins. The sequence is that of E3 UFM1-protein ligase 1 homolog from Arabidopsis thaliana (Mouse-ear cress).